Reading from the N-terminus, the 386-residue chain is SET and MYND domain-containing protein DDB_G0273589 (386 aa).

An SET domain is found at 6–294; that stretch reads NGLELKSSEN…KGDQLTISYI (289 aa). An MYND-type zinc finger spans residues 51–94; sequence CFNCIKQLPSVIKLSLKCNQCNEIWYCNEQCKNENINKHQHYEC. A coiled-coil region spans residues 136–171; sequence NNKFIEQQLNNNNNNNNDNEQLTNTLDDVFDLVENQ.

The protein belongs to the class V-like SAM-binding methyltransferase superfamily.

Functionally, probable methyltransferase. The polypeptide is SET and MYND domain-containing protein DDB_G0273589 (Dictyostelium discoideum (Social amoeba)).